A 190-amino-acid chain; its full sequence is FUN14 domain-containing protein 2 (190 aa).

Positions 1-13 (METSTQRTGSHLA) are enriched in polar residues. Residues 1 to 31 (METSTQRTGSHLAQTAAARHSASSRGEAARV) form a disordered region. The Cytoplasmic segment spans residues 1 to 81 (METSTQRTGS…GQESGPSAEK (81 aa)). Residues Ser10 and Ser54 each carry the phosphoserine modification. Residues 82 to 102 (YSVATQLLIGGVTGWCTGFIF) form a helical membrane-spanning segment. Residues 103–108 (QKVGKL) are Mitochondrial intermembrane-facing. The helical transmembrane segment at 109–129 (AATAVGGGFFLLQLANHTGYI) threads the bilayer. Residues 130–165 (KVDWQRVEKDMKKAKEQLKIRKSNQIPTEVKSKAEE) are Cytoplasmic-facing. Position 152 is a phosphoserine (Ser152). A helical transmembrane segment spans residues 166 to 186 (VVSFVKKNVLVTGGFFGGFLL). The Mitochondrial intermembrane portion of the chain corresponds to 187-190 (GMAS).

Belongs to the FUN14 family.

It localises to the mitochondrion outer membrane. It is found in the nucleus. Binds directly and specifically 1,2-Diacyl-sn-glycero-3-phospho-(1'-myo-inositol-3',4',5'-bisphosphate) (PIP3) leading to the recruitment of PIP3 to mitochondria and may play a role in the regulation of the platelet activation via AKT/GSK3B/cGMP signaling pathways. May act as transcription factor that regulates SREBP1 (isoform SREBP-1C) expression in order to modulate triglyceride (TG) homeostasis in hepatocytes. The sequence is that of FUN14 domain-containing protein 2 from Bos taurus (Bovine).